Reading from the N-terminus, the 338-residue chain is 1-aminocyclopropane-1-carboxylate deaminase (338 aa).

N6-(pyridoxal phosphate)lysine is present on lysine 51. Catalysis depends on serine 78, which acts as the Nucleophile.

Belongs to the ACC deaminase/D-cysteine desulfhydrase family. In terms of assembly, homotrimer. Pyridoxal 5'-phosphate serves as cofactor.

The enzyme catalyses 1-aminocyclopropane-1-carboxylate + H2O = 2-oxobutanoate + NH4(+). In terms of biological role, catalyzes a cyclopropane ring-opening reaction, the irreversible conversion of 1-aminocyclopropane-1-carboxylate (ACC) to ammonia and alpha-ketobutyrate. Allows growth on ACC as a nitrogen source. The protein is 1-aminocyclopropane-1-carboxylate deaminase of Burkholderia orbicola (strain MC0-3).